A 193-amino-acid polypeptide reads, in one-letter code: Ribosome maturation factor RimM (193 aa).

One can recognise a PRC barrel domain in the interval 100 to 173 (DDEFYYADLE…TLLIDPLAAG (74 aa)).

It belongs to the RimM family. As to quaternary structure, binds ribosomal protein uS19.

Its subcellular location is the cytoplasm. In terms of biological role, an accessory protein needed during the final step in the assembly of 30S ribosomal subunit, possibly for assembly of the head region. Essential for efficient processing of 16S rRNA. May be needed both before and after RbfA during the maturation of 16S rRNA. It has affinity for free ribosomal 30S subunits but not for 70S ribosomes. This chain is Ribosome maturation factor RimM, found in Rhizobium etli (strain CIAT 652).